The chain runs to 142 residues: Coactosin-like protein (142 aa).

At alanine 2 the chain carries N-acetylalanine. The region spanning 2–130 is the ADF-H domain; that stretch reads ATKIDKEACR…EEDFIRSELK (129 aa). Residues 66 to 75 form a flexible and important for F-actin binding region; that stretch reads TGDAMSKRSK. The residue at position 102 (lysine 102) is an N6-acetyllysine. A Phosphoserine modification is found at serine 141.

It belongs to the actin-binding proteins ADF family. Coactosin subfamily. As to quaternary structure, interacts with 5-lipoxygenase (ALOX5/5LO) in a calcium-independent manner. Binds to F-actin with a stoichiometry of 1:2.

Its subcellular location is the cytoplasm. It is found in the cytoskeleton. The protein localises to the nucleus. Functionally, binds to F-actin in a calcium-independent manner. Has no direct effect on actin depolymerization. Acts as a chaperone for ALOX5 (5LO), influencing both its stability and activity in leukotrienes synthesis. The protein is Coactosin-like protein (Cotl1) of Mus musculus (Mouse).